The primary structure comprises 444 residues: UDP-N-acetylmuramoylalanine--D-glutamate ligase (444 aa).

An ATP-binding site is contributed by 113-119; that stretch reads GSNGKST.

The protein belongs to the MurCDEF family.

It localises to the cytoplasm. It carries out the reaction UDP-N-acetyl-alpha-D-muramoyl-L-alanine + D-glutamate + ATP = UDP-N-acetyl-alpha-D-muramoyl-L-alanyl-D-glutamate + ADP + phosphate + H(+). The protein operates within cell wall biogenesis; peptidoglycan biosynthesis. Cell wall formation. Catalyzes the addition of glutamate to the nucleotide precursor UDP-N-acetylmuramoyl-L-alanine (UMA). This is UDP-N-acetylmuramoylalanine--D-glutamate ligase from Blochmanniella floridana.